Consider the following 252-residue polypeptide: MSSINKKELEKFEKISHNWWNKNGEFGILHRINHIRIEYIIEKIKSNYNDISKLQILDVGCGGGLIAAPLALQGFNVTAIDALKSNVETATIYAQKNGLKINYLQATIEELENDKLYDVVICLEVIEHVANIQQFILNLVQHIKPNGIAIISTMNRTKKAYLFGIIVAEYILGWVPKNTHDYSKFVKPSEIYEILTDTNIEIKELKGLVFNLAKNEWKLSNDIDVNYFMCLEKKMNSLSSTCNGIPQLKRVI.

Arg36, Gly60, Asp81, and Leu123 together coordinate S-adenosyl-L-methionine.

Belongs to the methyltransferase superfamily. UbiG/COQ3 family.

The catalysed reaction is a 3-demethylubiquinol + S-adenosyl-L-methionine = a ubiquinol + S-adenosyl-L-homocysteine + H(+). It carries out the reaction a 3-(all-trans-polyprenyl)benzene-1,2-diol + S-adenosyl-L-methionine = a 2-methoxy-6-(all-trans-polyprenyl)phenol + S-adenosyl-L-homocysteine + H(+). The protein operates within cofactor biosynthesis; ubiquinone biosynthesis. Functionally, O-methyltransferase that catalyzes the 2 O-methylation steps in the ubiquinone biosynthetic pathway. The protein is Ubiquinone biosynthesis O-methyltransferase of Rickettsia prowazekii (strain Madrid E).